Here is a 368-residue protein sequence, read N- to C-terminus: Chaperone protein DnaJ (368 aa).

The 65-residue stretch at 5–69 (DYYEVLGLSQ…QKRAQYDQFG (65 aa)) folds into the J domain. Residues 130-212 (GKELNVEIPV…CHGSGKVRKR (83 aa)) form a CR-type zinc finger. Zn(2+) contacts are provided by cysteine 143, cysteine 146, cysteine 160, cysteine 163, cysteine 186, cysteine 189, cysteine 200, and cysteine 203. CXXCXGXG motif repeat units lie at residues 143 to 150 (CDTCKGSG), 160 to 167 (CKHCSGSG), 186 to 193 (CGHCSGTG), and 200 to 207 (CTTCHGSG).

The protein belongs to the DnaJ family. As to quaternary structure, homodimer. Zn(2+) serves as cofactor.

It localises to the cytoplasm. In terms of biological role, participates actively in the response to hyperosmotic and heat shock by preventing the aggregation of stress-denatured proteins and by disaggregating proteins, also in an autonomous, DnaK-independent fashion. Unfolded proteins bind initially to DnaJ; upon interaction with the DnaJ-bound protein, DnaK hydrolyzes its bound ATP, resulting in the formation of a stable complex. GrpE releases ADP from DnaK; ATP binding to DnaK triggers the release of the substrate protein, thus completing the reaction cycle. Several rounds of ATP-dependent interactions between DnaJ, DnaK and GrpE are required for fully efficient folding. Also involved, together with DnaK and GrpE, in the DNA replication of plasmids through activation of initiation proteins. The protein is Chaperone protein DnaJ of Bacillus mycoides (strain KBAB4) (Bacillus weihenstephanensis).